We begin with the raw amino-acid sequence, 99 residues long: Cell division protein FtsB (99 aa).

Topologically, residues 1 to 3 are cytoplasmic; sequence MRV. The chain crosses the membrane as a helical span at residues 4–21; sequence FTAILLILLVLLQYRLWF. Residues 22-99 are Periplasmic-facing; it reads GKNSVPDYLV…KENSTRNVNN (78 aa). Residues 29–53 are a coiled coil; the sequence is YLVLKENVVRQQSANEKLQQRNKLL.

It belongs to the FtsB family. In terms of assembly, part of a complex composed of FtsB, FtsL and FtsQ.

The protein localises to the cell inner membrane. Its function is as follows. Essential cell division protein. May link together the upstream cell division proteins, which are predominantly cytoplasmic, with the downstream cell division proteins, which are predominantly periplasmic. This Colwellia psychrerythraea (strain 34H / ATCC BAA-681) (Vibrio psychroerythus) protein is Cell division protein FtsB.